Reading from the N-terminus, the 526-residue chain is Glucose-6-phosphate isomerase (526 aa).

E347 acts as the Proton donor in catalysis. Catalysis depends on residues H378 and K493.

It belongs to the GPI family.

The protein resides in the cytoplasm. The catalysed reaction is alpha-D-glucose 6-phosphate = beta-D-fructose 6-phosphate. It participates in carbohydrate biosynthesis; gluconeogenesis. Its pathway is carbohydrate degradation; glycolysis; D-glyceraldehyde 3-phosphate and glycerone phosphate from D-glucose: step 2/4. Catalyzes the reversible isomerization of glucose-6-phosphate to fructose-6-phosphate. The chain is Glucose-6-phosphate isomerase from Chlamydia pneumoniae (Chlamydophila pneumoniae).